A 416-amino-acid chain; its full sequence is Glutamyl-tRNA reductase (416 aa).

Residues 49 to 52 (TCNR), S105, 110 to 112 (EPQ), and Q116 each bind substrate. The active-site Nucleophile is the C50. Residue 185–190 (GAGETI) coordinates NADP(+).

This sequence belongs to the glutamyl-tRNA reductase family. As to quaternary structure, homodimer.

The enzyme catalyses (S)-4-amino-5-oxopentanoate + tRNA(Glu) + NADP(+) = L-glutamyl-tRNA(Glu) + NADPH + H(+). It participates in porphyrin-containing compound metabolism; protoporphyrin-IX biosynthesis; 5-aminolevulinate from L-glutamyl-tRNA(Glu): step 1/2. Functionally, catalyzes the NADPH-dependent reduction of glutamyl-tRNA(Glu) to glutamate 1-semialdehyde (GSA). The sequence is that of Glutamyl-tRNA reductase from Shewanella oneidensis (strain ATCC 700550 / JCM 31522 / CIP 106686 / LMG 19005 / NCIMB 14063 / MR-1).